The sequence spans 582 residues: NudC domain-containing protein 1 (582 aa).

At serine 7 the chain carries Phosphoserine. The region spanning 272-360 is the CS domain; it reads KVEPLYYWQQ…NEGLMWPELV (89 aa). A Phosphoserine modification is found at serine 387.

Its subcellular location is the cytoplasm. It is found in the nucleus. The polypeptide is NudC domain-containing protein 1 (Mus musculus (Mouse)).